The primary structure comprises 440 residues: L-gulonolactone oxidase (440 aa).

In terms of domain architecture, FAD-binding PCMH-type spans 17-187 (YSCEPELYFE…LNVTIQCVPA (171 aa)). Pros-8alpha-FAD histidine is present on His-54. The chain crosses the membrane as a helical span at residues 245–267 (WFWNYAIGYYLLEFLLWISVFVP).

Belongs to the oxygen-dependent FAD-linked oxidoreductase family. FAD is required as a cofactor.

It localises to the microsome membrane. Its subcellular location is the endoplasmic reticulum membrane. It carries out the reaction L-gulono-1,4-lactone + O2 = L-ascorbate + H2O2 + H(+). The protein operates within cofactor biosynthesis; L-ascorbate biosynthesis via UDP-alpha-D-glucuronate pathway; L-ascorbate from UDP-alpha-D-glucuronate: step 4/4. Oxidizes L-gulono-1,4-lactone to hydrogen peroxide and L-xylo-hexulonolactone which spontaneously isomerizes to L-ascorbate. This Scyliorhinus torazame (Cloudy catshark) protein is L-gulonolactone oxidase (GULO).